The following is a 2346-amino-acid chain: Myomegalin (2346 aa).

4 coiled-coil regions span residues 41–132, 162–205, 238–318, and 350–684; these read REDI…LVEA, DQYT…LLEE, DSHL…REML, and CSQL…RQYL. E252 is subject to Phosphoserine. The segment at 698-732 is disordered; it reads NQQAEVTPTGRLGKQTDQGSMQIPSRDDSTSLTAK. T704 is subject to Phosphothreonine. A compositionally biased stretch (basic and acidic residues) spans 722 to 732; sequence SRDDSTSLTAK. 6 coiled-coil regions span residues 743-936, 1002-1043, 1096-1124, 1212-1240, 1346-1385, and 1431-1455; these read GDLD…TLAA, LQEE…SSVS, SSLQAEFRKLQGKLKNAHNIINLLKEQLV, STQHLRSQLSQCKQRYQDLQEKLLLSEAT, GKSENILVLRKDIKDLKAQLQNANKVIQNLKSRVRSLSVT, and GLQAKKDLESLIQRVSQLEAQLPKN. Residues 1193-1214 form a disordered region; sequence DNQSQPRDPGPQSAFSLPGSTQ. Positions 1205 to 1214 are enriched in polar residues; sequence SAFSLPGSTQ. One can recognise an Olduvai domain in the interval 1551 to 1642; the sequence is KDHKSEKDQA…EEKKASPSHS (92 aa). Residues 1591–1600 are compositionally biased toward low complexity; sequence SLTPSSSHAL. 2 disordered regions span residues 1591–1614 and 1633–1690; these read SLTPSSSHALSDSHRSPSSTSFLS and EEKK…EANQ. Positions 1652–1690 are enriched in polar residues; that stretch reads AVLSSKPSSTSASQGAKAESNSNPISLPTPQNTPKEANQ. Coiled-coil stretches lie at residues 1736 to 1760 and 1840 to 2077; these read VVSLAEAQQELQMLQKQLGESASTV and GADL…QQLE. Disordered stretches follow at residues 2081–2103 and 2127–2156; these read GKASLSPSSINQNFPASTDPGNK and VFPSSASSTPGSETPIINRANGLGLDTSPV. Residues 2085–2103 are compositionally biased toward polar residues; that stretch reads LSPSSINQNFPASTDPGNK. Residues 2273–2312 adopt a coiled-coil conformation; sequence ESTERELLELRTKVSKQERLLQSTTEHLKNANQQKESMEQ.

As to quaternary structure, interacts with PDE4D. Isoform 13 interacts with MAPRE1 and MAPRE3. Isoform 13 forms a pericentrosomal complex with AKAP9, CDK5RAP2 and EB1/MAPRE1; within this complex, may mediate MAPRE1-binding to CDK5RAP2. Interaction of isoform 13 with AKAP9 stabilizes both proteins. Isoform 13 interacts (via N-terminus) with CAMSAP2; this interaction is much stronger in the presence of AKAP9. In complex with AKAP9, Isoform 13 recruits CAMSAP2 to the Golgi apparatus. Isoform 13 interacts with unglycosylated LGALS3BP; this interaction may connect the pericentrosomal complex to the gamma-tubulin ring complex (gamma-TuRC) to promote microtubule assembly and acetylation. Highly expressed in adult and fetal heart, in skeletal muscle and, to a lower extent, in brain and placenta.

It localises to the golgi apparatus. The protein resides in the cytoplasm. The protein localises to the cytoskeleton. Its subcellular location is the microtubule organizing center. It is found in the centrosome. Functionally, functions as an anchor sequestering components of the cAMP-dependent pathway to Golgi and/or centrosomes. Participates in microtubule dynamics, promoting microtubule assembly. Depending upon the cell context, may act at the level of the Golgi apparatus or that of the centrosome. In complex with AKAP9, recruits CAMSAP2 to the Golgi apparatus and tethers non-centrosomal minus-end microtubules to the Golgi, an important step for polarized cell movement. In complex with AKAP9, EB1/MAPRE1 and CDK5RAP2, contributes to microtubules nucleation and extension from the centrosome to the cell periphery, a crucial process for directed cell migration, mitotic spindle orientation and cell-cycle progression. The sequence is that of Myomegalin (PDE4DIP) from Homo sapiens (Human).